The chain runs to 933 residues: Myocardin (933 aa).

An MEF2C-binding motif is present at residues 12–27 (IRSKFRSVLQLRLQQR). RPEL repeat units follow at residues 18–43 (SVLQ…PPLR), 62–87 (DTLK…QASS), and 106–131 (DDLN…PVDC). Residues 153-205 (FEEDSSSDGLSPDQTRSEDLPGSAGSPLDTKAAETPLAGPRGTVQDLTLGSEN) are HDAC5-binding. Disordered stretches follow at residues 154–282 (EEDS…PPPM) and 324–365 (NEQM…GPLP). Polar residues predominate over residues 210–220 (SAPQSGNQSDL). Basic residues predominate over residues 248–265 (NRHKKPKDPKPKVKKLKY). Over residues 330–346 (NPNSSSAPLSSTPLSPA) the composition is skewed to low complexity. Residues 347 to 357 (KNSFSGQTGVS) show a composition bias toward polar residues. The region spanning 368–402 (LDDLKVSELRQQLRIRGLPVSGTKTALMDRLRPFQ) is the SAP domain. S445, S449, S453, and S457 each carry phosphoserine; by GSK3-beta. The stretch at 515–550 (LVEKQKVINELTWKLQQEQRQVEELRMQLQKQKRGT) forms a coiled coil. A disordered region spans residues 568 to 613 (DAGSSCPFAPLPRAVKRQSNSSEEQPAAGDAARLRPLGNTHCAESS). Residues S621, S625, S629, and S633 each carry the phosphoserine; by GSK3-beta modification. Disordered stretches follow at residues 630–672 (PQHS…VSSP) and 760–794 (PKIP…FDHY). The segment at 712–933 (ITQPPSYEDA…SPMDLHLQQW (222 aa)) is required for interaction with and ubiquitination by STUB1. Residues S810, S857, and S864 each carry the phosphoserine; by MAPK1 and MAPK3 modification. At T891 the chain carries Phosphothreonine; by MAPK1 and MAPK3.

As to quaternary structure, homodimer. Interacts with MLLT7/FOXO4. Interacts with SRF, its association does not depend on specific DNA sequences for ternary complex formation. Interacts (via C-terminal) with EP300 (via the CREB-binding domain). Interacts with HDAC4 and HDAC5. Interacts with MEF2C. Interacts (via C-terminus) with STUB1/CHIP. Interacts with PURB. Ubiquitinated; by STUB1/CHIP at the C-terminus, leading to its degradation by the proteasome. Phosphorylation by GSK3B is required for STUB1/CHIP-mediated ubiquitination. In terms of processing, phosphorylation negatively regulates the intrinsic myocardin transcriptional activity. Phosphorylated; by GSK3B. As to expression, expressed in the heart and in smooth muscle cells-containing tissues (aorta, pulmonary vein, lung), but is not detectable in skeletal muscle, liver, kidney and spleen.

The protein localises to the nucleus. Its function is as follows. Smooth muscle cells (SM) and cardiac muscle cells-specific transcriptional factor which uses the canonical single or multiple CArG boxes DNA sequence. Acts as a cofactor of serum response factor (SRF) with the potential to modulate SRF-target genes. Plays a crucial role in cardiogenesis, urinary bladder development, and differentiation of the smooth muscle cell lineage (myogenesis). Positively regulates the transcription of genes involved in vascular smooth muscle contraction. This Sus scrofa (Pig) protein is Myocardin (MYOCD).